Here is an 861-residue protein sequence, read N- to C-terminus: Isoleucine--tRNA ligase (861 aa).

The 'HIGH' region signature appears at 57-67; it reads PYANGNIHVGH. Residue glutamate 549 participates in L-isoleucyl-5'-AMP binding. Positions 590-594 match the 'KMSKS' region motif; sequence KMSKS. Residue lysine 593 coordinates ATP.

It belongs to the class-I aminoacyl-tRNA synthetase family. IleS type 1 subfamily. In terms of assembly, monomer.

The protein localises to the cytoplasm. The enzyme catalyses tRNA(Ile) + L-isoleucine + ATP = L-isoleucyl-tRNA(Ile) + AMP + diphosphate. Catalyzes the attachment of isoleucine to tRNA(Ile). As IleRS can inadvertently accommodate and process structurally similar amino acids such as valine, to avoid such errors it has two additional distinct tRNA(Ile)-dependent editing activities. One activity is designated as 'pretransfer' editing and involves the hydrolysis of activated Val-AMP. The other activity is designated 'posttransfer' editing and involves deacylation of mischarged Val-tRNA(Ile). The protein is Isoleucine--tRNA ligase of Mycoplasma pneumoniae (strain ATCC 29342 / M129 / Subtype 1) (Mycoplasmoides pneumoniae).